Reading from the N-terminus, the 609-residue chain is UvrABC system protein C (609 aa).

The GIY-YIG domain occupies 16-94; it reads SSPGVYRMYD…IKQYMPKYNV (79 aa). The UVR domain maps to 203 to 238; the sequence is QQVTKALVAKMEQAAVELNYEQAARYRDQITALRRV.

It belongs to the UvrC family. In terms of assembly, interacts with UvrB in an incision complex.

The protein localises to the cytoplasm. The UvrABC repair system catalyzes the recognition and processing of DNA lesions. UvrC both incises the 5' and 3' sides of the lesion. The N-terminal half is responsible for the 3' incision and the C-terminal half is responsible for the 5' incision. This Shewanella piezotolerans (strain WP3 / JCM 13877) protein is UvrABC system protein C.